A 137-amino-acid polypeptide reads, in one-letter code: Transcription antitermination protein NusB (137 aa).

The protein belongs to the NusB family.

Involved in transcription antitermination. Required for transcription of ribosomal RNA (rRNA) genes. Binds specifically to the boxA antiterminator sequence of the ribosomal RNA (rrn) operons. The sequence is that of Transcription antitermination protein NusB from Clavibacter sepedonicus (Clavibacter michiganensis subsp. sepedonicus).